The following is a 150-amino-acid chain: SsrA-binding protein (150 aa).

The protein belongs to the SmpB family.

The protein localises to the cytoplasm. In terms of biological role, required for rescue of stalled ribosomes mediated by trans-translation. Binds to transfer-messenger RNA (tmRNA), required for stable association of tmRNA with ribosomes. tmRNA and SmpB together mimic tRNA shape, replacing the anticodon stem-loop with SmpB. tmRNA is encoded by the ssrA gene; the 2 termini fold to resemble tRNA(Ala) and it encodes a 'tag peptide', a short internal open reading frame. During trans-translation Ala-aminoacylated tmRNA acts like a tRNA, entering the A-site of stalled ribosomes, displacing the stalled mRNA. The ribosome then switches to translate the ORF on the tmRNA; the nascent peptide is terminated with the 'tag peptide' encoded by the tmRNA and targeted for degradation. The ribosome is freed to recommence translation, which seems to be the essential function of trans-translation. The chain is SsrA-binding protein from Magnetococcus marinus (strain ATCC BAA-1437 / JCM 17883 / MC-1).